We begin with the raw amino-acid sequence, 678 residues long: UvrABC system protein B (678 aa).

The Helicase ATP-binding domain maps to 35-422; it reads EGVSDGLMFQ…ADNVVEQVVR (388 aa). ATP is bound at residue 48-55; that stretch reads GVTGSGKT. Positions 101–124 match the Beta-hairpin motif; that stretch reads YYDYYQPEAYVPTRDLFIEKDSSI. In terms of domain architecture, Helicase C-terminal spans 439 to 605; the sequence is QVDDLLGEIH…GVSKAVRELI (167 aa). Positions 633–668 constitute a UVR domain; that stretch reads AREIRRLEKLMMDHARNLEFEQAAAARDALNALKSR.

It belongs to the UvrB family. Forms a heterotetramer with UvrA during the search for lesions. Interacts with UvrC in an incision complex.

It is found in the cytoplasm. Functionally, the UvrABC repair system catalyzes the recognition and processing of DNA lesions. A damage recognition complex composed of 2 UvrA and 2 UvrB subunits scans DNA for abnormalities. Upon binding of the UvrA(2)B(2) complex to a putative damaged site, the DNA wraps around one UvrB monomer. DNA wrap is dependent on ATP binding by UvrB and probably causes local melting of the DNA helix, facilitating insertion of UvrB beta-hairpin between the DNA strands. Then UvrB probes one DNA strand for the presence of a lesion. If a lesion is found the UvrA subunits dissociate and the UvrB-DNA preincision complex is formed. This complex is subsequently bound by UvrC and the second UvrB is released. If no lesion is found, the DNA wraps around the other UvrB subunit that will check the other stand for damage. The chain is UvrABC system protein B from Bordetella pertussis (strain Tohama I / ATCC BAA-589 / NCTC 13251).